Consider the following 193-residue polypeptide: Acyl carrier protein phosphodiesterase (193 aa).

It belongs to the AcpH family.

It catalyses the reaction holo-[ACP] + H2O = apo-[ACP] + (R)-4'-phosphopantetheine + H(+). Converts holo-ACP to apo-ACP by hydrolytic cleavage of the phosphopantetheine prosthetic group from ACP. The chain is Acyl carrier protein phosphodiesterase from Escherichia coli O7:K1 (strain IAI39 / ExPEC).